The chain runs to 263 residues: MTQTNQAPLVIKLGGAALSCTQTLSQLFGAIAAYQKSAQRQIAIVHGGGYLVDELMAKLQLKTVKKHGLRVTPYDQIPVIAGALAGTANKLLQGQAIADGLNAVGLSLADGGLCHVEELDPELGAVGKATPGDSSLLQAILNTGALPIISSIGLTAEGQMMNVNADQAAVAVAGALDAELVLLSDVSGVLDGKGHLLKSLSKKEANALIEGQVITDGMIVKVKAALEAANDLGRPIEVATWRYPEKLTQLFAGESIGTQFLPQ.

Residues 48-49 (GG), R70, and N162 contribute to the substrate site.

This sequence belongs to the acetylglutamate kinase family. ArgB subfamily.

It is found in the cytoplasm. The enzyme catalyses N-acetyl-L-glutamate + ATP = N-acetyl-L-glutamyl 5-phosphate + ADP. It participates in amino-acid biosynthesis; L-arginine biosynthesis; N(2)-acetyl-L-ornithine from L-glutamate: step 2/4. Catalyzes the ATP-dependent phosphorylation of N-acetyl-L-glutamate. The protein is Acetylglutamate kinase of Vibrio parahaemolyticus serotype O3:K6 (strain RIMD 2210633).